A 306-amino-acid chain; its full sequence is uncharacterized protein (306 aa).

A run of 10 helical transmembrane segments spans residues 6 to 26, 35 to 55, 69 to 89, 98 to 118, 122 to 142, 154 to 174, 186 to 206, 211 to 231, 247 to 267, and 281 to 301; these read LLGFTFALITAMAWGSLPIAL, AQTIVWYRFIIAAVSLLALLA, YAWIMLIGVIGLTSNFLLFSS, VAQIFIHLSSFGMLICGVLIF, LGLHQKIGLFLLLIGLGLFFN, YSTGVILGVGGALIWVAYGMA, QILLMMYLGCAIAFMPMADFS, LTPLALICFIYCCLNTLIGYG, VVITLVPLFTILFSHIAHYFS, and YIGAFVVVCGAILSAIGHKLL. EamA domains follow at residues 17–142 and 166–296; these read MAWG…LFFN and LIWV…LSAI.

It belongs to the EamA transporter family.

The protein resides in the cell membrane. This is an uncharacterized protein from Haemophilus influenzae (strain ATCC 51907 / DSM 11121 / KW20 / Rd).